The chain runs to 260 residues: Indole-3-glycerol phosphate synthase (260 aa).

It belongs to the TrpC family.

It catalyses the reaction 1-(2-carboxyphenylamino)-1-deoxy-D-ribulose 5-phosphate + H(+) = (1S,2R)-1-C-(indol-3-yl)glycerol 3-phosphate + CO2 + H2O. It functions in the pathway amino-acid biosynthesis; L-tryptophan biosynthesis; L-tryptophan from chorismate: step 4/5. In Staphylococcus aureus (strain MSSA476), this protein is Indole-3-glycerol phosphate synthase.